The following is a 92-amino-acid chain: Transcription factor PRE4 (92 aa).

The bHLH domain occupies 5-60; it reads KSRSRQTGASMITDEQINDLVLQLHRLLPELANNRRSGKVSASRVLQETCSYIRNL.

This sequence belongs to the bHLH protein family. As to quaternary structure, interacts with HFR1 and IBH1. Expressed in roots, leaves, stems and flowers.

It is found in the nucleus. Its function is as follows. Atypical and probable non DNA-binding bHLH transcription factor that integrates multiple signaling pathways to regulate cell elongation and plant development. Regulates light responses by binding and inhibiting the activity of the bHLH transcription factor HFR1, a critical regulator of light signaling and shade avoidance. May have a regulatory role in various aspects of gibberellin-dependent growth and development. This is Transcription factor PRE4 (PRE4) from Arabidopsis thaliana (Mouse-ear cress).